The following is a 79-amino-acid chain: DNA-directed RNA polymerase subunit omega (79 aa).

The protein belongs to the RNA polymerase subunit omega family. As to quaternary structure, the RNAP catalytic core consists of 2 alpha, 1 beta, 1 beta' and 1 omega subunit. When a sigma factor is associated with the core the holoenzyme is formed, which can initiate transcription.

It carries out the reaction RNA(n) + a ribonucleoside 5'-triphosphate = RNA(n+1) + diphosphate. Its function is as follows. Promotes RNA polymerase assembly. Latches the N- and C-terminal regions of the beta' subunit thereby facilitating its interaction with the beta and alpha subunits. This is DNA-directed RNA polymerase subunit omega (rpoZ) from Thermotoga maritima (strain ATCC 43589 / DSM 3109 / JCM 10099 / NBRC 100826 / MSB8).